The primary structure comprises 501 residues: Beta-glucosidase 25 (501 aa).

A signal peptide spans 1–19 (MSLLTLVHILVSFSACVEA). Glutamine 39 provides a ligand contact to a beta-D-glucoside. The N-linked (GlcNAc...) asparagine glycan is linked to asparagine 107. Residues histidine 140 and 185 to 186 (NE) contribute to the a beta-D-glucoside site. Catalysis depends on glutamate 186, which acts as the Proton donor. Cysteine 205 and cysteine 213 form a disulfide bridge. A beta-D-glucoside contacts are provided by residues tyrosine 329, glutamate 402, tryptophan 452, 459–460 (EW), and phenylalanine 468. Glutamate 402 serves as the catalytic Nucleophile. Residue asparagine 478 is glycosylated (N-linked (GlcNAc...) asparagine).

Belongs to the glycosyl hydrolase 1 family.

It carries out the reaction Hydrolysis of terminal, non-reducing beta-D-glucosyl residues with release of beta-D-glucose.. The chain is Beta-glucosidase 25 (BGLU25) from Oryza sativa subsp. japonica (Rice).